A 270-amino-acid polypeptide reads, in one-letter code: 2-C-methyl-D-erythritol 4-phosphate cytidylyltransferase (270 aa).

Residues 1–33 (MSDESRPSPAETPATTFAETSAETSAAGRSPAR) are disordered. A compositionally biased stretch (low complexity) spans 7–27 (PSPAETPATTFAETSAETSAA).

Belongs to the IspD/TarI cytidylyltransferase family. IspD subfamily.

It carries out the reaction 2-C-methyl-D-erythritol 4-phosphate + CTP + H(+) = 4-CDP-2-C-methyl-D-erythritol + diphosphate. The protein operates within isoprenoid biosynthesis; isopentenyl diphosphate biosynthesis via DXP pathway; isopentenyl diphosphate from 1-deoxy-D-xylulose 5-phosphate: step 2/6. Its function is as follows. Catalyzes the formation of 4-diphosphocytidyl-2-C-methyl-D-erythritol from CTP and 2-C-methyl-D-erythritol 4-phosphate (MEP). This is 2-C-methyl-D-erythritol 4-phosphate cytidylyltransferase from Streptomyces coelicolor (strain ATCC BAA-471 / A3(2) / M145).